Consider the following 644-residue polypeptide: Keratin, type II cytoskeletal 1 (644 aa).

Residues 2-179 (SRQFSSRSGY…DPEIQKVKSR (178 aa)) are head. An Omega-N-methylarginine modification is found at Arg12. A phosphoserine mark is found at Ser18 and Ser21. Positions 22-38 (AGIINYQRRTTSSSTRR) are enriched in low complexity. Positions 22–47 (AGIINYQRRTTSSSTRRSGGGGGRFS) are disordered. Arg45 carries the omega-N-methylarginine modification. Ser66 is modified (phosphoserine). Residue Arg82 is modified to Omega-N-methylarginine. Residues 180-215 (EREQIKSLNNQFASFIDKVRFLEQQNQVLQTKWELL) form a coil 1A region. An IF rod domain is found at 180-493 (EREQIKSLNN…TLLEGEESRM (314 aa)). The linker 1 stretch occupies residues 216–234 (QQVDTSTRTHNLEPYFESF). The interval 235 to 326 (INNLRRRVDQ…ALYQAELSQM (92 aa)) is coil 1B. Lys276 carries the post-translational modification N6,N6-dimethyllysine. The linker 12 stretch occupies residues 327–350 (QTQISETNVILSMDNNRSLDLDSI). Ser344 is subject to Phosphoserine. Positions 351 to 489 (IAEVKAQYED…ATYRTLLEGE (139 aa)) are coil 2. 2 disordered regions span residues 489-523 (EESRMSGECAPNVSVSVSTSHTTISGGGSRGGGGG) and 568-644 (SGGG…GVTR). A tail region spans residues 490-644 (ESRMSGECAP…VSTTYSGVTR (155 aa)). Positions 501–511 (VSVSVSTSHTT) are enriched in low complexity. Gly residues-rich tracts occupy residues 513-523 (SGGGSRGGGGG) and 568-620 (SGGG…GSSS). 2 positions are modified to omega-N-methylarginine: Arg518 and Arg588. Residues 621-631 (GGVKSSGGSSS) show a composition bias toward low complexity. The segment covering 632–644 (VKFVSTTYSGVTR) has biased composition (polar residues).

The protein belongs to the intermediate filament family. In terms of assembly, heterotetramer of two type I and two type II keratins. Heterodimer with KRT10. Two heterodimers of KRT1 and KRT10 form a heterotetramer. Forms a heterodimer with KRT14; the interaction is more abundant in the absence of KRT5. Interacts with PLEC isoform 1C, when in a heterodimer with KRT10. Interacts with ITGB1 in the presence of RACK1 and SRC, and with RACK1. Interacts with C1QBP; the association represents a cell surface kininogen receptor. Interacts with EPPK1; interaction is dependent of higher-order structure of intermediate filament. Post-translationally, undergoes deimination of some arginine residues (citrullination). As to expression, the source of this protein is neonatal foreskin. The 67-kDa type II keratins are expressed in terminally differentiating epidermis.

The protein resides in the cell membrane. The protein localises to the cytoplasm. Functionally, may regulate the activity of kinases such as PKC and SRC via binding to integrin beta-1 (ITB1) and the receptor of activated protein C kinase 1 (RACK1). In complex with C1QBP is a high affinity receptor for kininogen-1/HMWK. The polypeptide is Keratin, type II cytoskeletal 1 (KRT1) (Homo sapiens (Human)).